The following is a 396-amino-acid chain: Acetate kinase (396 aa).

Position 8 (Asn-8) interacts with Mg(2+). Residue Lys-15 participates in ATP binding. Residue Arg-89 coordinates substrate. Catalysis depends on Asp-146, which acts as the Proton donor/acceptor. Residues His-206–Gly-210, Asp-283–Arg-285, and Gly-331–Asn-335 contribute to the ATP site. Position 383 (Glu-383) interacts with Mg(2+).

Belongs to the acetokinase family. In terms of assembly, homodimer. It depends on Mg(2+) as a cofactor. The cofactor is Mn(2+).

It localises to the cytoplasm. The catalysed reaction is acetate + ATP = acetyl phosphate + ADP. The protein operates within metabolic intermediate biosynthesis; acetyl-CoA biosynthesis; acetyl-CoA from acetate: step 1/2. Catalyzes the formation of acetyl phosphate from acetate and ATP. Can also catalyze the reverse reaction. The polypeptide is Acetate kinase (Streptococcus gordonii (strain Challis / ATCC 35105 / BCRC 15272 / CH1 / DL1 / V288)).